Here is a 444-residue protein sequence, read N- to C-terminus: Trigger factor (444 aa).

Residues Asn170–Thr255 form the PPIase FKBP-type domain.

Belongs to the FKBP-type PPIase family. Tig subfamily.

The protein localises to the cytoplasm. The enzyme catalyses [protein]-peptidylproline (omega=180) = [protein]-peptidylproline (omega=0). Functionally, involved in protein export. Acts as a chaperone by maintaining the newly synthesized protein in an open conformation. Functions as a peptidyl-prolyl cis-trans isomerase. The chain is Trigger factor (tig) from Mycoplasma pneumoniae (strain ATCC 29342 / M129 / Subtype 1) (Mycoplasmoides pneumoniae).